Here is a 259-residue protein sequence, read N- to C-terminus: uncharacterized protein (259 aa).

One can recognise an ABC transporter domain in the interval 4 to 248 (LQTTNLSKTY…SILDTLSVLG (245 aa)). 42–49 (GPSGSGKT) contributes to the ATP binding site.

It belongs to the ABC transporter superfamily.

This is an uncharacterized protein from Bacillus subtilis (strain 168).